Here is a 219-residue protein sequence, read N- to C-terminus: Protein-L-isoaspartate O-methyltransferase (219 aa).

The active site involves serine 67.

The protein belongs to the methyltransferase superfamily. L-isoaspartyl/D-aspartyl protein methyltransferase family.

The protein resides in the cytoplasm. It catalyses the reaction [protein]-L-isoaspartate + S-adenosyl-L-methionine = [protein]-L-isoaspartate alpha-methyl ester + S-adenosyl-L-homocysteine. Its function is as follows. Catalyzes the methyl esterification of L-isoaspartyl residues in peptides and proteins that result from spontaneous decomposition of normal L-aspartyl and L-asparaginyl residues. It plays a role in the repair and/or degradation of damaged proteins. In Cereibacter sphaeroides (strain ATCC 17029 / ATH 2.4.9) (Rhodobacter sphaeroides), this protein is Protein-L-isoaspartate O-methyltransferase.